We begin with the raw amino-acid sequence, 262 residues long: 3-dehydro-D-guloside 4-epimerase (262 aa).

E146 serves as the catalytic Proton donor/acceptor. 2 residues coordinate Mn(2+): E146 and D179. H182 lines the substrate pocket. H205 lines the Mn(2+) pocket. Residue R211 participates in substrate binding. E240 functions as the Proton donor/acceptor in the catalytic mechanism. E240 serves as a coordination point for Mn(2+).

This sequence belongs to the hyi family. Mn(2+) serves as cofactor.

The enzyme catalyses a 3-dehydro-D-guloside = a 3-dehydro-D-glucoside. Its function is as follows. Catalyzes the epimerization at C4 of 3-dehydro-D-gulosides leading to 3-dehydro-D-glucosides. Probably functions in a metabolic pathway that transforms D-gulosides to D-glucosides. Can use methyl alpha-3-dehydro-D-glucoside and methyl beta-3-dehydro-D-glucoside as substrates in vitro. However, the actual specific physiological substrates for this metabolic pathway are unknown. Cannot act on D-psicose, D-fructose, D-tagatose, D-sorbose, L-xylulose, or L-ribulose. The sequence is that of 3-dehydro-D-guloside 4-epimerase (ycjR) from Escherichia coli (strain K12).